The following is a 241-amino-acid chain: Sugar fermentation stimulation protein homolog (241 aa).

The protein belongs to the SfsA family.

In Jannaschia sp. (strain CCS1), this protein is Sugar fermentation stimulation protein homolog.